We begin with the raw amino-acid sequence, 578 residues long: Proteasome-associated ATPase (578 aa).

The stretch at 8–84 (TAAELRNQVR…LKEEVDRLAQ (77 aa)) forms a coiled coil. An ATP-binding site is contributed by 267–272 (GCGKTL). Residues 577–578 (YL) form a docks into pockets in the proteasome alpha-ring region.

It belongs to the AAA ATPase family. In terms of assembly, homohexamer. Assembles into a hexameric ring structure that caps the 20S proteasome core. Strongly interacts with the prokaryotic ubiquitin-like protein Pup through a hydrophobic interface; the interacting region of ARC lies in its N-terminal coiled-coil domain. There is one Pup binding site per ARC hexamer ring. Upon ATP-binding, the C-terminus of ARC interacts with the alpha-rings of the proteasome core, possibly by binding to the intersubunit pockets.

Its pathway is protein degradation; proteasomal Pup-dependent pathway. Its function is as follows. ATPase which is responsible for recognizing, binding, unfolding and translocation of pupylated proteins into the bacterial 20S proteasome core particle. May be essential for opening the gate of the 20S proteasome via an interaction with its C-terminus, thereby allowing substrate entry and access to the site of proteolysis. Thus, the C-termini of the proteasomal ATPase may function like a 'key in a lock' to induce gate opening and therefore regulate proteolysis. The protein is Proteasome-associated ATPase of Kribbella flavida (strain DSM 17836 / JCM 10339 / NBRC 14399).